Here is a 309-residue protein sequence, read N- to C-terminus: L-aminoadipate-semialdehyde dehydrogenase-phosphopantetheinyl transferase (309 aa).

CoA is bound by residues Arg47, 86-91 (RTSKGK), and 108-111 (NISH). The Mg(2+) site is built by Asp129 and Glu181. Position 181–185 (181–185 (ESFIK)) interacts with CoA.

It belongs to the P-Pant transferase superfamily. AcpS family. In terms of assembly, monomer. It depends on Mg(2+) as a cofactor.

Its subcellular location is the cytoplasm. It localises to the cytosol. The enzyme catalyses apo-[ACP] + CoA = holo-[ACP] + adenosine 3',5'-bisphosphate + H(+). It carries out the reaction apo-[ACP] + acetyl-CoA = acetyl-[ACP] + adenosine 3',5'-bisphosphate + H(+). Functionally, catalyzes the post-translational modification of target proteins by phosphopantetheine. Can transfer the 4'-phosphopantetheine moiety from coenzyme A, regardless of whether the CoA is presented in the free thiol form or as an acetyl thioester, to a serine residue of a broad range of acceptors including the acyl carrier domain of FASN. The chain is L-aminoadipate-semialdehyde dehydrogenase-phosphopantetheinyl transferase (Aasdhppt) from Rattus norvegicus (Rat).